Reading from the N-terminus, the 85-residue chain is Small ribosomal subunit protein bS18A (85 aa).

This sequence belongs to the bacterial ribosomal protein bS18 family. As to quaternary structure, part of the 30S ribosomal subunit. Forms a tight heterodimer with protein bS6.

Functionally, binds as a heterodimer with protein bS6 to the central domain of the 16S rRNA, where it helps stabilize the platform of the 30S subunit. This is Small ribosomal subunit protein bS18A from Mycolicibacterium smegmatis (strain ATCC 700084 / mc(2)155) (Mycobacterium smegmatis).